The sequence spans 202 residues: uncharacterized protein (202 aa).

Topologically, residues 1-6 are cytoplasmic; it reads MITDFL. A helical; Signal-anchor for type II membrane protein membrane pass occupies residues 7-23; that stretch reads LAFSILAVSTTLGVSNL. Over 24 to 202 the chain is Extracellular; that stretch reads NKQCRDLLQC…KNGKTRGHSG (179 aa). Asn-53 carries N-linked (GlcNAc...) asparagine glycosylation.

Its subcellular location is the membrane. This is an uncharacterized protein from Caenorhabditis elegans.